A 358-amino-acid chain; its full sequence is Probable cinnamyl alcohol dehydrogenase (358 aa).

Cysteine 48 is a Zn(2+) binding site. NADP(+) is bound at residue serine 50. Positions 70, 71, 101, 104, 107, 115, and 164 each coordinate Zn(2+). Residues threonine 168, 189–194 (GLGGVG), 212–217 (SSSDKK), threonine 252, glycine 276, and 299–301 (SFV) each bind NADP(+).

The protein belongs to the zinc-containing alcohol dehydrogenase family. In terms of assembly, homodimer. Zn(2+) serves as cofactor. In terms of tissue distribution, most actively expressed in stem, hypocotyl and root tissue.

It carries out the reaction (E)-cinnamyl alcohol + NADP(+) = (E)-cinnamaldehyde + NADPH + H(+). The enzyme catalyses (E)-coniferol + NADP(+) = (E)-coniferaldehyde + NADPH + H(+). It catalyses the reaction (E)-sinapyl alcohol + NADP(+) = (E)-sinapaldehyde + NADPH + H(+). The catalysed reaction is (E)-4-coumaroyl alcohol + NADP(+) = (E)-4-coumaraldehyde + NADPH + H(+). It carries out the reaction (E)-caffeyl alcohol + NADP(+) = (E)-caffeyl aldehyde + NADPH + H(+). Its pathway is aromatic compound metabolism; phenylpropanoid biosynthesis. Its function is as follows. This protein catalyzes the final step in a branch of phenylpropanoid synthesis specific for production of lignin monomers. It acts on coniferyl-, sinapyl-, 4-coumaryl- and cinnamyl-alcohol. In Medicago sativa (Alfalfa), this protein is Probable cinnamyl alcohol dehydrogenase (CAD2).